The chain runs to 577 residues: Proline--tRNA ligase (577 aa).

The protein belongs to the class-II aminoacyl-tRNA synthetase family. ProS type 1 subfamily. As to quaternary structure, homodimer.

It is found in the cytoplasm. It carries out the reaction tRNA(Pro) + L-proline + ATP = L-prolyl-tRNA(Pro) + AMP + diphosphate. Functionally, catalyzes the attachment of proline to tRNA(Pro) in a two-step reaction: proline is first activated by ATP to form Pro-AMP and then transferred to the acceptor end of tRNA(Pro). As ProRS can inadvertently accommodate and process non-cognate amino acids such as alanine and cysteine, to avoid such errors it has two additional distinct editing activities against alanine. One activity is designated as 'pretransfer' editing and involves the tRNA(Pro)-independent hydrolysis of activated Ala-AMP. The other activity is designated 'posttransfer' editing and involves deacylation of mischarged Ala-tRNA(Pro). The misacylated Cys-tRNA(Pro) is not edited by ProRS. This is Proline--tRNA ligase from Helicobacter pylori (strain P12).